We begin with the raw amino-acid sequence, 433 residues long: Enolase 2 (433 aa).

The disordered stretch occupies residues 34–56 (RGMVPSGASTGEHEAVELRDGDK). Basic and acidic residues predominate over residues 44 to 56 (GEHEAVELRDGDK). Residue Gln163 participates in (2R)-2-phosphoglycerate binding. Glu205 (proton donor) is an active-site residue. Mg(2+) contacts are provided by Asp243, Glu290, and Asp317. Positions 342, 371, 372, and 393 each coordinate (2R)-2-phosphoglycerate. Lys342 functions as the Proton acceptor in the catalytic mechanism.

It belongs to the enolase family. Requires Mg(2+) as cofactor.

Its subcellular location is the cytoplasm. It is found in the secreted. The protein resides in the cell surface. It carries out the reaction (2R)-2-phosphoglycerate = phosphoenolpyruvate + H2O. It functions in the pathway carbohydrate degradation; glycolysis; pyruvate from D-glyceraldehyde 3-phosphate: step 4/5. Catalyzes the reversible conversion of 2-phosphoglycerate (2-PG) into phosphoenolpyruvate (PEP). It is essential for the degradation of carbohydrates via glycolysis. The chain is Enolase 2 from Lactococcus lactis subsp. cremoris (strain SK11).